The primary structure comprises 444 residues: RING finger and transmembrane domain-containing protein 2 (444 aa).

The Extracellular portion of the chain corresponds to 1 to 181 (MWLFTVNQVL…ILLAKLCFQH (181 aa)). Disordered stretches follow at residues 13–41 (MQRRHSSNTDNIPPERNRSQALSSEASVD) and 92–149 (PASR…PGTP). Over residues 107 to 121 (YHHRQPHHHFHHGGH) the composition is skewed to basic residues. The segment covering 131 to 140 (GGDHRGHSEE) has biased composition (basic and acidic residues). A helical transmembrane segment spans residues 182–202 (KLGIAVCIGMASTFAYANSTL). The Cytoplasmic portion of the chain corresponds to 203-214 (REQVSLKEKRSV). Residues 215-235 (LVILWILAFLAGNTLYVLYTF) form a helical membrane-spanning segment. Over 236-255 (SSQQLYNSLIFLKPNLETLD) the chain is Extracellular. A helical transmembrane segment spans residues 256-276 (FFDLLWIVGIADFVLKYITIA). Residues 277–329 (LKCLIVALPKIILAVKSKGKFYLVIEELSQLFRSLVPIQLWYKYIMGDDSSNS) lie on the Cytoplasmic side of the membrane. The chain crosses the membrane as a helical span at residues 330 to 350 (YFLGGVLIVLYSLCKSFDICG). Topologically, residues 351-444 (RVGGVRKALK…GATSAHFQVY (94 aa)) are extracellular. The RING-type; degenerate zinc finger occupies 384 to 422 (CAICQAEFREPLILLCQHVFCEECLCLWLDRERTCPLSR).

The protein resides in the membrane. Its function is as follows. E3 ubiquitin-protein ligase that negatively regulates IL3-dependent cellular responses through IL3RA ubiquitination and degradation by the proteasome, having an anti-inflammatory effect. The sequence is that of RING finger and transmembrane domain-containing protein 2 (RNFT2) from Pongo abelii (Sumatran orangutan).